The sequence spans 273 residues: Pantothenate synthetase (273 aa).

Residue 27-34 (MGALHAGH) participates in ATP binding. His-34 serves as the catalytic Proton donor. Gln-58 contacts (R)-pantoate. Gln-58 lines the beta-alanine pocket. 144–147 (GKKD) provides a ligand contact to ATP. Gln-150 provides a ligand contact to (R)-pantoate. ATP contacts are provided by residues Val-173 and 181 to 184 (LSSR).

Belongs to the pantothenate synthetase family. Homodimer.

It is found in the cytoplasm. It carries out the reaction (R)-pantoate + beta-alanine + ATP = (R)-pantothenate + AMP + diphosphate + H(+). It functions in the pathway cofactor biosynthesis; (R)-pantothenate biosynthesis; (R)-pantothenate from (R)-pantoate and beta-alanine: step 1/1. Functionally, catalyzes the condensation of pantoate with beta-alanine in an ATP-dependent reaction via a pantoyl-adenylate intermediate. This Campylobacter hominis (strain ATCC BAA-381 / DSM 21671 / CCUG 45161 / LMG 19568 / NCTC 13146 / CH001A) protein is Pantothenate synthetase.